A 1131-amino-acid chain; its full sequence is Probable pre-mRNA-splicing factor ATP-dependent RNA helicase mog-1 (1131 aa).

Basic and acidic residues-rich tracts occupy residues 1 to 12 (MSDKRADGRLEG), 65 to 122 (RGVT…DRSG), 139 to 148 (WDQDDREGSS), 160 to 173 (RGER…DSER), 180 to 225 (RSER…WEEE), and 407 to 416 (GNYKESHQFA). Disordered stretches follow at residues 1–225 (MSDK…WEEE) and 389–416 (MGVK…HQFA). The region spanning 451-614 (MNVIRENNVV…FGGNCPTFTI (164 aa)) is the Helicase ATP-binding domain. 464 to 471 (GETGSGKT) contributes to the ATP binding site. The DEAH box motif lies at 561–564 (DEAH). Residues 629–812 (PVEDYVDAAV…NVVLLLKSLG (184 aa)) form the Helicase C-terminal domain. Basic and acidic residues-rich tracts occupy residues 1085–1114 (EMRE…RRVV) and 1121–1131 (ARSERRKLWGL). A disordered region spans residues 1085–1131 (EMREAQKEMERRKEESDKAFKRPESSRRVVEVGSKSARSERRKLWGL).

The protein belongs to the DEAD box helicase family. DEAH subfamily. PRP16 sub-subfamily.

It localises to the nucleus. The catalysed reaction is ATP + H2O = ADP + phosphate + H(+). Its function is as follows. Probable ATP-binding RNA helicase involved in pre-mRNA splicing. This Caenorhabditis elegans protein is Probable pre-mRNA-splicing factor ATP-dependent RNA helicase mog-1 (mog-1).